The primary structure comprises 102 residues: Protamine-2 (102 aa).

3 positions are modified to phosphoserine: S8, S10, and S37. Disordered stretches follow at residues 15 to 41 (EVYGQQLHGQEQGHHDQEEQGLSPEQV) and 66 to 102 (IHRQQHRSCKRRRRHSCRHRRKHRRGCRTRRRTCRRH).

It belongs to the protamine P2 family. As to quaternary structure, interacts with TDRP. Post-translationally, proteolytic processing into mature chains is required for histone eviction during spermatogenesis. Transition proteins (TNP1 and TNP2) are required for processing. As to expression, testis.

The protein localises to the nucleus. Its subcellular location is the chromosome. Its function is as follows. Protamines substitute for histones in the chromatin of sperm during the haploid phase of spermatogenesis. They compact sperm DNA into a highly condensed, stable and inactive complex. This chain is Protamine-2 (PRM2), found in Pongo pygmaeus (Bornean orangutan).